The chain runs to 69 residues: Cytochrome c oxidase subunit 8A, mitochondrial (69 aa).

The N-terminal 25 residues, 1–25 (MSVLTPLLLRGLAGSARRLPVPRAQ), are a transit peptide targeting the mitochondrion. An SIFI-degron motif is present at residues 2 to 19 (SVLTPLLLRGLAGSARRL). Residues 26 to 36 (IHSKPPREQLG) are Mitochondrial matrix-facing. Residues 37-60 (TMDVAIGITSCFLCFLLPAGWVLS) traverse the membrane as a helical segment. Residues 61–69 (HLESYKKRE) are Mitochondrial intermembrane-facing.

Belongs to the cytochrome c oxidase VIII family. Component of the cytochrome c oxidase (complex IV, CIV), a multisubunit enzyme composed of 14 subunits. The complex is composed of a catalytic core of 3 subunits MT-CO1, MT-CO2 and MT-CO3, encoded in the mitochondrial DNA, and 11 supernumerary subunits COX4I, COX5A, COX5B, COX6A, COX6B, COX6C, COX7A, COX7B, COX7C, COX8 and NDUFA4, which are encoded in the nuclear genome. The complex exists as a monomer or a dimer and forms supercomplexes (SCs) in the inner mitochondrial membrane with NADH-ubiquinone oxidoreductase (complex I, CI) and ubiquinol-cytochrome c oxidoreductase (cytochrome b-c1 complex, complex III, CIII), resulting in different assemblies (supercomplex SCI(1)III(2)IV(1) and megacomplex MCI(2)III(2)IV(2)). In response to mitochondrial stress, the precursor protein is ubiquitinated by the SIFI complex in the cytoplasm before mitochondrial import, leading to its degradation. Within the SIFI complex, UBR4 initiates ubiquitin chain that are further elongated or branched by KCMF1.

It localises to the mitochondrion inner membrane. The protein operates within energy metabolism; oxidative phosphorylation. In terms of biological role, component of the cytochrome c oxidase, the last enzyme in the mitochondrial electron transport chain which drives oxidative phosphorylation. The respiratory chain contains 3 multisubunit complexes succinate dehydrogenase (complex II, CII), ubiquinol-cytochrome c oxidoreductase (cytochrome b-c1 complex, complex III, CIII) and cytochrome c oxidase (complex IV, CIV), that cooperate to transfer electrons derived from NADH and succinate to molecular oxygen, creating an electrochemical gradient over the inner membrane that drives transmembrane transport and the ATP synthase. Cytochrome c oxidase is the component of the respiratory chain that catalyzes the reduction of oxygen to water. Electrons originating from reduced cytochrome c in the intermembrane space (IMS) are transferred via the dinuclear copper A center (CU(A)) of subunit 2 and heme A of subunit 1 to the active site in subunit 1, a binuclear center (BNC) formed by heme A3 and copper B (CU(B)). The BNC reduces molecular oxygen to 2 water molecules using 4 electrons from cytochrome c in the IMS and 4 protons from the mitochondrial matrix. This Carlito syrichta (Philippine tarsier) protein is Cytochrome c oxidase subunit 8A, mitochondrial (COX8A).